The primary structure comprises 598 residues: Transcription factor himD (598 aa).

Positions 18–47 form a DNA-binding region, zn(2)-C6 fungal-type; it reads CQNCARAKIRCIRSVPTGSCDRCERLRKTC. Residues 87 to 110 form a disordered region; the sequence is TVSEASIDDKSPTTTPTTPRPPPD.

The protein localises to the nucleus. Functionally, transcription factor that, with himB, probably co-regulates the him gene cluster that mediates the biosynthesis of himeic acid A, a ubiquitin-activating enzyme (E1) inhibitor. The protein is Transcription factor himD of Aspergillus japonicus.